Consider the following 392-residue polypeptide: F-box protein At5g65850 (392 aa).

The region spanning 29-78 (TEKSVQIPVDIIIEILLRLPAKSIATCRCVSKLWISVICRQDFTELFLTR) is the F-box domain.

The sequence is that of F-box protein At5g65850 from Arabidopsis thaliana (Mouse-ear cress).